The chain runs to 300 residues: MAFKSGFVALIGRPNVGKSTLMNYFVGKKISIISPKPQTTRNSIKGILTLDDAQIIFIDTPGVHPPKNKLGEYMVKVSEKTLKEVDLILYIVEAIDSGIGPWDEAILEKLKEVQTPKILVLNKADLASKENIEILKSLFSGRLSFEFIIEIAAINGYNCDVLLEKIKKLLPEGPKYYLDDMTTDVRESFIVSEIIREKILLNLSEEVPHGVGVSVERFSEREDKDILDIEATIYCEKESHKAIIIGKGGQMLKKIGMQAREELEMLFGIKVNLQLWVKVKKNWRDDIAAMKMLGYNLKEV.

Positions 4–172 (KSGFVALIGR…LEKIKKLLPE (169 aa)) constitute an Era-type G domain. The segment at 12-19 (GRPNVGKS) is G1. 12–19 (GRPNVGKS) is a GTP binding site. Residues 38–42 (QTTRN) form a G2 region. Positions 59–62 (DTPG) are G3. Residues 59–63 (DTPGV) and 122–125 (NKAD) contribute to the GTP site. Positions 122 to 125 (NKAD) are G4. Residues 151-153 (IAA) form a G5 region. The region spanning 195 to 281 (IREKILLNLS…NLQLWVKVKK (87 aa)) is the KH type-2 domain.

The protein belongs to the TRAFAC class TrmE-Era-EngA-EngB-Septin-like GTPase superfamily. Era GTPase family. As to quaternary structure, monomer.

The protein resides in the cytoplasm. It is found in the cell membrane. An essential GTPase that binds both GDP and GTP, with rapid nucleotide exchange. Plays a role in 16S rRNA processing and 30S ribosomal subunit biogenesis and possibly also in cell cycle regulation and energy metabolism. The protein is GTPase Era of Caldicellulosiruptor saccharolyticus (strain ATCC 43494 / DSM 8903 / Tp8T 6331).